Consider the following 652-residue polypeptide: DNA ligase (652 aa).

NAD(+) contacts are provided by residues 29–33 (DSDYD), 78–79 (SL), and E107. The active-site N6-AMP-lysine intermediate is the K109. The NAD(+) site is built by R130, E164, K278, and K302. The Zn(2+) site is built by C395, C398, C413, and C418. One can recognise a BRCT domain in the interval 577-652 (NSDAALFGLT…IEDEDWLRQL (76 aa)).

The protein belongs to the NAD-dependent DNA ligase family. LigA subfamily. Requires Mg(2+) as cofactor. It depends on Mn(2+) as a cofactor.

It catalyses the reaction NAD(+) + (deoxyribonucleotide)n-3'-hydroxyl + 5'-phospho-(deoxyribonucleotide)m = (deoxyribonucleotide)n+m + AMP + beta-nicotinamide D-nucleotide.. DNA ligase that catalyzes the formation of phosphodiester linkages between 5'-phosphoryl and 3'-hydroxyl groups in double-stranded DNA using NAD as a coenzyme and as the energy source for the reaction. It is essential for DNA replication and repair of damaged DNA. This is DNA ligase from Streptococcus pyogenes serotype M1.